A 507-amino-acid polypeptide reads, in one-letter code: Maturase K (507 aa).

This sequence belongs to the intron maturase 2 family. MatK subfamily.

The protein resides in the plastid. It localises to the chloroplast. Functionally, usually encoded in the trnK tRNA gene intron. Probably assists in splicing its own and other chloroplast group II introns. The protein is Maturase K of Euryale ferox (Gorgon plant).